Consider the following 414-residue polypeptide: Serine/threonine transporter SstT (414 aa).

Helical transmembrane passes span Gly16 to Ser36, Leu46 to Val66, Ile84 to Phe104, Ala143 to Leu163, Ala180 to Val200, Leu219 to Phe239, Met300 to Val320, and Val332 to Ile352.

This sequence belongs to the dicarboxylate/amino acid:cation symporter (DAACS) (TC 2.A.23) family.

The protein resides in the cell inner membrane. The catalysed reaction is L-serine(in) + Na(+)(in) = L-serine(out) + Na(+)(out). The enzyme catalyses L-threonine(in) + Na(+)(in) = L-threonine(out) + Na(+)(out). Its function is as follows. Involved in the import of serine and threonine into the cell, with the concomitant import of sodium (symport system). This chain is Serine/threonine transporter SstT, found in Salmonella arizonae (strain ATCC BAA-731 / CDC346-86 / RSK2980).